The primary structure comprises 592 residues: NADH-quinone oxidoreductase subunit C/D (592 aa).

Residues 1-183 (MLTEFNSIPA…GPYILTEEKE (183 aa)) are NADH dehydrogenase I subunit C. The tract at residues 207 to 592 (DFMFLNLGPN…IDFVMADVDR (386 aa)) is NADH dehydrogenase I subunit D.

This sequence in the N-terminal section; belongs to the complex I 30 kDa subunit family. The protein in the C-terminal section; belongs to the complex I 49 kDa subunit family. In terms of assembly, NDH-1 is composed of 13 different subunits. Subunits NuoB, CD, E, F, and G constitute the peripheral sector of the complex.

It is found in the cell inner membrane. The catalysed reaction is a quinone + NADH + 5 H(+)(in) = a quinol + NAD(+) + 4 H(+)(out). NDH-1 shuttles electrons from NADH, via FMN and iron-sulfur (Fe-S) centers, to quinones in the respiratory chain. The immediate electron acceptor for the enzyme in this species is believed to be ubiquinone. Couples the redox reaction to proton translocation (for every two electrons transferred, four hydrogen ions are translocated across the cytoplasmic membrane), and thus conserves the redox energy in a proton gradient. The polypeptide is NADH-quinone oxidoreductase subunit C/D (Acidiphilium cryptum (strain JF-5)).